The sequence spans 456 residues: Exodeoxyribonuclease 7 large subunit (456 aa).

The protein belongs to the XseA family. Heterooligomer composed of large and small subunits.

Its subcellular location is the cytoplasm. The catalysed reaction is Exonucleolytic cleavage in either 5'- to 3'- or 3'- to 5'-direction to yield nucleoside 5'-phosphates.. Functionally, bidirectionally degrades single-stranded DNA into large acid-insoluble oligonucleotides, which are then degraded further into small acid-soluble oligonucleotides. The chain is Exodeoxyribonuclease 7 large subunit from Shigella dysenteriae serotype 1 (strain Sd197).